The following is a 180-amino-acid chain: Oligoribonuclease (180 aa).

The Exonuclease domain occupies 7–170 (LIWIDLEMTG…DDIRESIAEL (164 aa)). The active site involves Tyr-128.

Belongs to the oligoribonuclease family.

The protein resides in the cytoplasm. In terms of biological role, 3'-to-5' exoribonuclease specific for small oligoribonucleotides. This Pseudomonas paraeruginosa (strain DSM 24068 / PA7) (Pseudomonas aeruginosa (strain PA7)) protein is Oligoribonuclease.